A 94-amino-acid polypeptide reads, in one-letter code: Aspartyl/glutamyl-tRNA(Asn/Gln) amidotransferase subunit C (94 aa).

It belongs to the GatC family. In terms of assembly, heterotrimer of A, B and C subunits.

The catalysed reaction is L-glutamyl-tRNA(Gln) + L-glutamine + ATP + H2O = L-glutaminyl-tRNA(Gln) + L-glutamate + ADP + phosphate + H(+). The enzyme catalyses L-aspartyl-tRNA(Asn) + L-glutamine + ATP + H2O = L-asparaginyl-tRNA(Asn) + L-glutamate + ADP + phosphate + 2 H(+). Allows the formation of correctly charged Asn-tRNA(Asn) or Gln-tRNA(Gln) through the transamidation of misacylated Asp-tRNA(Asn) or Glu-tRNA(Gln) in organisms which lack either or both of asparaginyl-tRNA or glutaminyl-tRNA synthetases. The reaction takes place in the presence of glutamine and ATP through an activated phospho-Asp-tRNA(Asn) or phospho-Glu-tRNA(Gln). This Carboxydothermus hydrogenoformans (strain ATCC BAA-161 / DSM 6008 / Z-2901) protein is Aspartyl/glutamyl-tRNA(Asn/Gln) amidotransferase subunit C.